Reading from the N-terminus, the 1138-residue chain is Phosphatidylserine decarboxylase proenzyme 2 (1138 aa).

The 122-residue stretch at 1–122 (MRIIKGRKRG…SNSGLSSHSH (122 aa)) folds into the C2 1 domain. Disordered stretches follow at residues 90-166 (TGAP…PGST), 269-305 (MRSS…DTDL), and 413-448 (AVSE…REDS). The span at 98 to 121 (SRPRTTTANTSSSTLSNSGLSSHS) shows a compositional bias: low complexity. A compositionally biased stretch (polar residues) spans 125–135 (RNLNVTSKGNQ). The segment covering 136 to 166 (TSTSINSVSSSATPAPSHSSSSLSTTGPGST) has biased composition (low complexity). The span at 293–305 (EIRREKPYSDTDL) shows a compositional bias: basic and acidic residues. The segment covering 421–448 (SVDDEESENQQESDEEFDIYNEDEREDS) has biased composition (acidic residues). Residues 478-600 (RRAKSNFFIS…QQQQHENEWI (123 aa)) enclose the C2 2 domain. Residues Asp-571, Ser-574, and Asp-577 each coordinate Ca(2+). Active-site charge relay system; for autoendoproteolytic cleavage activity residues include Asp-899, His-956, and Ser-1043. Catalysis depends on Ser-1043, which acts as the Schiff-base intermediate with substrate; via pyruvic acid; for decarboxylase activity. A Pyruvic acid (Ser); by autocatalysis modification is found at Ser-1043.

The protein belongs to the phosphatidylserine decarboxylase family. PSD-B subfamily. Eukaryotic type II sub-subfamily. In terms of assembly, heterodimer of a large membrane-associated beta subunit and a small pyruvoyl-containing alpha subunit. Interacts with pstB2/PDR17. This interaction may be a means to structurally tether the donor membrane (ER) harboring PstB2/PDR17 to acceptor membranes (Golgi/endosomes) harboring PSD2 during PtdSer transport to the site of PtdEtn synthesis. It depends on pyruvate as a cofactor. Requires Ca(2+) as cofactor. In terms of processing, is synthesized initially as an inactive proenzyme. Formation of the active enzyme involves a self-maturation process in which the active site pyruvoyl group is generated from an internal serine residue via an autocatalytic post-translational modification. Two non-identical subunits are generated from the proenzyme in this reaction, and the pyruvate is formed at the N-terminus of the alpha chain, which is derived from the carboxyl end of the proenzyme. The autoendoproteolytic cleavage occurs by a canonical serine protease mechanism, in which the side chain hydroxyl group of the serine supplies its oxygen atom to form the C-terminus of the beta chain, while the remainder of the serine residue undergoes an oxidative deamination to produce ammonia and the pyruvoyl prosthetic group on the alpha chain. During this reaction, the Ser that is part of the protease active site of the proenzyme becomes the pyruvoyl prosthetic group, which constitutes an essential element of the active site of the mature decarboxylase.

Its subcellular location is the golgi apparatus membrane. The protein localises to the endosome membrane. It catalyses the reaction a 1,2-diacyl-sn-glycero-3-phospho-L-serine + H(+) = a 1,2-diacyl-sn-glycero-3-phosphoethanolamine + CO2. It functions in the pathway phospholipid metabolism; phosphatidylethanolamine biosynthesis; phosphatidylethanolamine from CDP-diacylglycerol: step 2/2. Functionally, catalyzes the formation of phosphatidylethanolamine (PtdEtn) from phosphatidylserine (PtdSer). Plays a central role in phospholipid metabolism and in the interorganelle trafficking of phosphatidylserine. Phosphatidylethanolamine produced by PSD2 is insufficient to completely provide the PtdEtn pool required by mitochondria under respiratory conditions. PSD2 is also involved in the PtdSer transport step to the site of PtdEtn synthesis on the Golgi/endosome membranes. Required for normal heavy metal resistance. The sequence is that of Phosphatidylserine decarboxylase proenzyme 2 from Saccharomyces cerevisiae (strain ATCC 204508 / S288c) (Baker's yeast).